A 303-amino-acid polypeptide reads, in one-letter code: Bidirectional sugar transporter SWEET14 (303 aa).

Topologically, residues 1–9 are extracellular; sequence MAGMSLQHP. Residues 10–30 traverse the membrane as a helical segment; sequence WAFAFGLLGNIISFMTYLAPL. A MtN3/slv 1 domain is found at 13-98; sequence AFGLLGNIIS…AVYLVYAPKK (86 aa). The Cytoplasmic segment spans residues 31–44; that stretch reads PTFYRIYKSKSTQG. The helical transmembrane segment at 45-65 threads the bilayer; that stretch reads FQSVPYVVALFSAMLWIYYAL. Topologically, residues 66–72 are extracellular; it reads LKSDECL. Residues 73–93 traverse the membrane as a helical segment; that stretch reads LITINSAGCVIETIYIAVYLV. The Cytoplasmic portion of the chain corresponds to 94-105; sequence YAPKKAKMFTAK. The chain crosses the membrane as a helical span at residues 106-126; the sequence is LLLLVNVGVFGLILLLTLLLS. The Extracellular segment spans residues 127–133; the sequence is AGDRRIV. The helical transmembrane segment at 134–154 threads the bilayer; that stretch reads VLGWVCVGFSVSVFVAPLSII. A MtN3/slv 2 domain is found at 134–217; that stretch reads VLGWVCVGFS…MGLYAMYRNS (84 aa). Residues 155-167 are Cytoplasmic-facing; sequence RLVVRTKSVEFMP. The helical transmembrane segment at 168-188 threads the bilayer; the sequence is FSLSFSLTISAVVWFLYGLLI. The Extracellular segment spans residues 189-192; it reads KDKY. The chain crosses the membrane as a helical span at residues 193 to 213; that stretch reads VALPNVLGFSFGVIQMGLYAM. The Cytoplasmic portion of the chain corresponds to 214–303; sequence YRNSTPKAVL…AGAGEKKVAA (90 aa). Positions 266–290 are disordered; the sequence is HPVDVESPPAEAPPQEDDKAAAATA.

The protein belongs to the SWEET sugar transporter family. Forms homooligomers and/or heterooligomers.

Its subcellular location is the cell membrane. Its function is as follows. Mediates both low-affinity uptake and efflux of sugar across the plasma membrane. The protein is Bidirectional sugar transporter SWEET14 (SWEET14) of Oryza sativa subsp. indica (Rice).